Reading from the N-terminus, the 210-residue chain is Putative Dihydrofolate reductase (210 aa).

The DHFR domain maps to 4–184 (TLYCVVAVDT…IFYMFETYIK (181 aa)).

The protein belongs to the dihydrofolate reductase family.

The catalysed reaction is (6S)-5,6,7,8-tetrahydrofolate + NADP(+) = 7,8-dihydrofolate + NADPH + H(+). This is Putative Dihydrofolate reductase (ORF2) from Human herpesvirus 8 type P (isolate GK18) (HHV-8).